Consider the following 180-residue polypeptide: Large ribosomal subunit protein uL6 (180 aa).

The protein belongs to the universal ribosomal protein uL6 family. Part of the 50S ribosomal subunit.

Its function is as follows. This protein binds to the 23S rRNA, and is important in its secondary structure. It is located near the subunit interface in the base of the L7/L12 stalk, and near the tRNA binding site of the peptidyltransferase center. This chain is Large ribosomal subunit protein uL6, found in Christiangramia forsetii (strain DSM 17595 / CGMCC 1.15422 / KT0803) (Gramella forsetii).